Consider the following 282-residue polypeptide: 4-diphosphocytidyl-2-C-methyl-D-erythritol kinase (282 aa).

Residue Lys12 is part of the active site. 95–105 (PMGGGIGGGSS) contributes to the ATP binding site. Asp137 is an active-site residue.

This sequence belongs to the GHMP kinase family. IspE subfamily.

The enzyme catalyses 4-CDP-2-C-methyl-D-erythritol + ATP = 4-CDP-2-C-methyl-D-erythritol 2-phosphate + ADP + H(+). It participates in isoprenoid biosynthesis; isopentenyl diphosphate biosynthesis via DXP pathway; isopentenyl diphosphate from 1-deoxy-D-xylulose 5-phosphate: step 3/6. Functionally, catalyzes the phosphorylation of the position 2 hydroxy group of 4-diphosphocytidyl-2C-methyl-D-erythritol. This is 4-diphosphocytidyl-2-C-methyl-D-erythritol kinase from Pseudomonas paraeruginosa (strain DSM 24068 / PA7) (Pseudomonas aeruginosa (strain PA7)).